The primary structure comprises 273 residues: Shikimate dehydrogenase (NADP(+)) (273 aa).

Residues 15–17 (SKS) and Thr-62 each bind shikimate. Lys-66 (proton acceptor) is an active-site residue. Asp-78 contributes to the NADP(+) binding site. Residues Asn-87 and Asp-103 each coordinate shikimate. NADP(+)-binding positions include 127 to 131 (GAGGA), 150 to 155 (NRTHTR), Ala-218, and Gly-238.

The protein belongs to the shikimate dehydrogenase family. In terms of assembly, homodimer.

The enzyme catalyses shikimate + NADP(+) = 3-dehydroshikimate + NADPH + H(+). It functions in the pathway metabolic intermediate biosynthesis; chorismate biosynthesis; chorismate from D-erythrose 4-phosphate and phosphoenolpyruvate: step 4/7. Functionally, involved in the biosynthesis of the chorismate, which leads to the biosynthesis of aromatic amino acids. Catalyzes the reversible NADPH linked reduction of 3-dehydroshikimate (DHSA) to yield shikimate (SA). This Yersinia pseudotuberculosis serotype O:1b (strain IP 31758) protein is Shikimate dehydrogenase (NADP(+)).